A 395-amino-acid chain; its full sequence is ATP-dependent RNA helicase eIF4A (395 aa).

The short motif at 22-50 is the Q motif element; that stretch reads TSFDDLGLKDELLRGIYGYGFENPSSIQQ. In terms of domain architecture, Helicase ATP-binding spans 53–223; that stretch reads ILPVIKGNDV…GKFMRDPVRI (171 aa). Position 66-73 (66-73) interacts with ATP; that stretch reads AQSGTGKT. A DEAD box motif is present at residues 171 to 174; that stretch reads DEAD. Residues 234–395 enclose the Helicase C-terminal domain; that stretch reads GIKQFYIDVE…EMPTNIADLI (162 aa).

The protein belongs to the DEAD box helicase family. eIF4A subfamily. In terms of assembly, component of the eIF4F complex, which composition varies with external and internal environmental conditions. It is composed of at least eIF4A, eIF4E and eIF4G.

The protein resides in the cytoplasm. The enzyme catalyses ATP + H2O = ADP + phosphate + H(+). In terms of biological role, ATP-dependent RNA helicase which is a subunit of the eIF4F complex involved in cap recognition and is required for mRNA binding to ribosome. In the current model of translation initiation, eIF4A unwinds RNA secondary structures in the 5'-UTR of mRNAs which is necessary to allow efficient binding of the small ribosomal subunit, and subsequent scanning for the initiator codon. In Yarrowia lipolytica (strain CLIB 122 / E 150) (Yeast), this protein is ATP-dependent RNA helicase eIF4A (TIF1).